Consider the following 122-residue polypeptide: Large ribosomal subunit protein uL14 (122 aa).

It belongs to the universal ribosomal protein uL14 family. As to quaternary structure, part of the 50S ribosomal subunit. Forms a cluster with proteins L3 and L19. In the 70S ribosome, L14 and L19 interact and together make contacts with the 16S rRNA in bridges B5 and B8.

Its function is as follows. Binds to 23S rRNA. Forms part of two intersubunit bridges in the 70S ribosome. The chain is Large ribosomal subunit protein uL14 from Thermus aquaticus.